A 73-amino-acid polypeptide reads, in one-letter code: MKSINIQDQFLNQIRKENTFVTVFLLNGFQLRGQVKGFDNFTVLIESEGKQQLIYKHAISTFAPQKNVQLELE.

Residues 8–68 enclose the Sm domain; the sequence is DQFLNQIRKE…ISTFAPQKNV (61 aa).

Belongs to the Hfq family. In terms of assembly, homohexamer.

In terms of biological role, RNA chaperone that binds small regulatory RNA (sRNAs) and mRNAs to facilitate mRNA translational regulation in response to envelope stress, environmental stress and changes in metabolite concentrations. Also binds with high specificity to tRNAs. The sequence is that of RNA-binding protein Hfq from Bacillus licheniformis (strain ATCC 14580 / DSM 13 / JCM 2505 / CCUG 7422 / NBRC 12200 / NCIMB 9375 / NCTC 10341 / NRRL NRS-1264 / Gibson 46).